The sequence spans 224 residues: Ribosomal RNA large subunit methyltransferase E (224 aa).

Positions 64, 66, 97, 113, and 138 each coordinate S-adenosyl-L-methionine. Lysine 178 serves as the catalytic Proton acceptor.

The protein belongs to the class I-like SAM-binding methyltransferase superfamily. RNA methyltransferase RlmE family.

The protein resides in the cytoplasm. The enzyme catalyses uridine(2552) in 23S rRNA + S-adenosyl-L-methionine = 2'-O-methyluridine(2552) in 23S rRNA + S-adenosyl-L-homocysteine + H(+). Specifically methylates the uridine in position 2552 of 23S rRNA at the 2'-O position of the ribose in the fully assembled 50S ribosomal subunit. This Methylibium petroleiphilum (strain ATCC BAA-1232 / LMG 22953 / PM1) protein is Ribosomal RNA large subunit methyltransferase E.